The sequence spans 248 residues: MAGHSQFKNIMHRKGRVDAVRSKVFGKLAREITVAAKLGTPDPAMNPRLRAAILAARAENMPKDNIERAIKKAAGADGENYEDIRYEGYGPGGAALIVEAQTDNRNRTASDVRSAFTKSGGSLAETGAVAFMFDRVGVIAYPASVADADTMLEAAIEAGADDVSSGEDGHEVICAQDSYGEVTKALEARFGEPARTGLIWKAQNTINVDDETGEKLIRLVEVIEDQDDVQHVYVNFALSDALVAKLQA.

This sequence belongs to the TACO1 family.

The protein localises to the cytoplasm. This chain is Probable transcriptional regulatory protein Mrad2831_3553, found in Methylobacterium radiotolerans (strain ATCC 27329 / DSM 1819 / JCM 2831 / NBRC 15690 / NCIMB 10815 / 0-1).